Here is a 417-residue protein sequence, read N- to C-terminus: 1-deoxy-D-xylulose 5-phosphate reductoisomerase (417 aa).

Residues threonine 10, glycine 11, serine 12, isoleucine 13, glycine 36, arginine 37, asparagine 38, and asparagine 130 each contribute to the NADPH site. Lysine 131 lines the 1-deoxy-D-xylulose 5-phosphate pocket. Residue glutamate 132 participates in NADPH binding. Aspartate 156 is a Mn(2+) binding site. 1-deoxy-D-xylulose 5-phosphate contacts are provided by serine 157, glutamate 158, serine 194, and histidine 217. Residue glutamate 158 participates in Mn(2+) binding. NADPH is bound at residue glycine 223. 1-deoxy-D-xylulose 5-phosphate is bound by residues serine 230, asparagine 235, lysine 236, and glutamate 239. Position 239 (glutamate 239) interacts with Mn(2+).

The protein belongs to the DXR family. Mg(2+) serves as cofactor. Requires Mn(2+) as cofactor.

The enzyme catalyses 2-C-methyl-D-erythritol 4-phosphate + NADP(+) = 1-deoxy-D-xylulose 5-phosphate + NADPH + H(+). The protein operates within isoprenoid biosynthesis; isopentenyl diphosphate biosynthesis via DXP pathway; isopentenyl diphosphate from 1-deoxy-D-xylulose 5-phosphate: step 1/6. In terms of biological role, catalyzes the NADPH-dependent rearrangement and reduction of 1-deoxy-D-xylulose-5-phosphate (DXP) to 2-C-methyl-D-erythritol 4-phosphate (MEP). The sequence is that of 1-deoxy-D-xylulose 5-phosphate reductoisomerase from Synechococcus sp. (strain CC9902).